The primary structure comprises 278 residues: Inner membrane mitoribosome receptor MBA1, mitochondrial (278 aa).

A mitochondrion-targeting transit peptide spans 1–33 (MSVLRSTCLFFPPRSLLISFNKRRLFSTSRLIL).

Interacts with OXA1 and MDM38. Binds to mitoribosomes in order to recruit them to the mitochondrial inner membrane.

The protein resides in the mitochondrion inner membrane. Its function is as follows. Mitochondrial inner membrane-associated mitoribosome receptor that spatially aligns the mitoribosome exit tunnel with the membrane insertion machinery and allows cotranslational protein membrane insertion. The polypeptide is Inner membrane mitoribosome receptor MBA1, mitochondrial (Saccharomyces cerevisiae (strain ATCC 204508 / S288c) (Baker's yeast)).